The following is a 432-amino-acid chain: D-amino acid dehydrogenase (432 aa).

An FAD-binding site is contributed by 3 to 17; it reads VVILGSGVVGVTSAW.

The protein belongs to the DadA oxidoreductase family. FAD is required as a cofactor.

It catalyses the reaction a D-alpha-amino acid + A + H2O = a 2-oxocarboxylate + AH2 + NH4(+). It functions in the pathway amino-acid degradation; D-alanine degradation; NH(3) and pyruvate from D-alanine: step 1/1. Functionally, oxidative deamination of D-amino acids. The protein is D-amino acid dehydrogenase of Salmonella arizonae (strain ATCC BAA-731 / CDC346-86 / RSK2980).